The sequence spans 161 residues: Chaperone protein dnaJ 11, chloroplastic (161 aa).

Over residues 1 to 18 (MLSSSPTSFTHPFLSSSP) the composition is skewed to low complexity. The interval 1-31 (MLSSSPTSFTHPFLSSSPPLSPISPPSRTAR) is disordered. Residues 1–36 (MLSSSPTSFTHPFLSSSPPLSPISPPSRTARISPPL) constitute a chloroplast transit peptide. The region spanning 65 to 133 (SLYDVLEVPL…EKRSVYDRRM (69 aa)) is the J domain.

The protein belongs to the DnaJ family. C/III subfamily. Expressed in roots, stems, leaves, flowers and developing siliques.

The protein localises to the plastid. The protein resides in the chloroplast stroma. Plays a continuous role in plant development probably in the structural organization of compartments. The sequence is that of Chaperone protein dnaJ 11, chloroplastic (ATJ11) from Arabidopsis thaliana (Mouse-ear cress).